The sequence spans 1120 residues: Elongation factor-like GTPase 1 (1120 aa).

One can recognise a tr-type G domain in the interval 17 to 272; it reads ANIRNICVLA…LMKTLWGDYY (256 aa). Residues 26–33, 92–96, and 146–149 each bind GTP; these read AHVDHGKT, DSPGH, and NKID. A disordered region spans residues 430–496; the sequence is PRPLTQEEIA…VESMTPKPVL (67 aa). 2 stretches are compositionally biased toward basic and acidic residues: residues 438 to 452 and 475 to 484; these read IAQR…HAEK and PKGEEPRGDE. At Lys-528 the chain carries N6-acetyllysine. Positions 907-930 are disordered; the sequence is ASDLAKEGQEENETCSGGNENQEL. Polar residues predominate over residues 920-930; the sequence is TCSGGNENQEL.

It belongs to the TRAFAC class translation factor GTPase superfamily. Classic translation factor GTPase family. In terms of assembly, associates with the 60S ribosomal subunit. Found in a complex consisting of the 60S ribosomal subunit, SBDS and EFL1. Interacts with SBDS and binds to GTP and GDP; the interaction with SBDS decreases EFL1 affinity for GDP and facilitates GDP release. As to expression, expressed at low levels in brain. Expression is highly increased in glioma tissues.

It catalyses the reaction GTP + H2O = GDP + phosphate + H(+). Its activity is regulated as follows. GTPase activity is stimulated in the presence of 60S ribosome subunits. In terms of biological role, GTPase involved in the biogenesis of the 60S ribosomal subunit and translational activation of ribosomes. Together with SBDS, triggers the GTP-dependent release of EIF6 from 60S pre-ribosomes in the cytoplasm, thereby activating ribosomes for translation competence by allowing 80S ribosome assembly and facilitating EIF6 recycling to the nucleus, where it is required for 60S rRNA processing and nuclear export. The polypeptide is Elongation factor-like GTPase 1 (Homo sapiens (Human)).